A 515-amino-acid chain; its full sequence is Vesicular acetylcholine transporter (515 aa).

Residues 1 to 40 lie on the Cytoplasmic side of the membrane; it reads MGVTMAVGLAKAAMGKISSAIGERSKRISGAMNEPRRKRK. Residues 41-61 form a helical membrane-spanning segment; that stretch reads ILLVIVCIAMLLDNMLYMVIV. The Lumenal, vesicle segment spans residues 62-112; it reads PIIPNYLETIRTYKLVYITTPSNGTNGSLLNSTQRAVLERNPNANEDIQIG. N-linked (GlcNAc...) asparagine glycosylation is found at asparagine 84, asparagine 87, and asparagine 92. Residues 113–133 traverse the membrane as a helical segment; that stretch reads VLFASKAILQLLSNPFTGTFI. Residues 134–139 lie on the Cytoplasmic side of the membrane; sequence DRVGYD. The helical transmembrane segment at 140-160 threads the bilayer; it reads IPLLIGLTIMFFSTITFAFGE. Over 161-169 the chain is Lumenal, vesicle; it reads SYAVLFAAR. The chain crosses the membrane as a helical span at residues 170-190; that stretch reads SLQGLGSAFADTSGIAMIADK. Over 191-201 the chain is Cytoplasmic; the sequence is YTEESERTQAL. Residues 202–222 traverse the membrane as a helical segment; that stretch reads GIALAFISFGSLVAPPFGGVL. The Lumenal, vesicle portion of the chain corresponds to 223 to 229; the sequence is YQFAGKW. A helical membrane pass occupies residues 230-250; the sequence is VPFLVLSFVCLLDGILLLMVV. Over 251-271 the chain is Cytoplasmic; the sequence is TPFASRTRENMLQGTPIYKLM. The helical transmembrane segment at 272–292 threads the bilayer; that stretch reads IDPYIAVVAGALTTCNIPLAF. Over 293–310 the chain is Lumenal, vesicle; sequence LEPTISNWMKKTMNASEW. An N-linked (GlcNAc...) asparagine glycan is attached at asparagine 306. A helical transmembrane segment spans residues 311–331; that stretch reads QMGITWLPAFFPHILGVYITV. Topologically, residues 332–341 are cytoplasmic; that stretch reads KLAAKYPNYQ. Residues 342–362 form a helical membrane-spanning segment; sequence WFYGAVGLVIIGASSCTIPAC. The Lumenal, vesicle segment spans residues 363–367; sequence RNFEE. The chain crosses the membrane as a helical span at residues 368 to 388; that stretch reads LIIPLCALCFGIALVDTALLP. The Cytoplasmic segment spans residues 389–404; sequence TLAFLVDIRYVSVYGS. The helical transmembrane segment at 405 to 425 threads the bilayer; the sequence is VYAIADISYSVAYALGPIMAG. Topologically, residues 426–432 are lumenal, vesicle; the sequence is QIVHDLG. A helical transmembrane segment spans residues 433–453; that stretch reads FVQLNLGMGLVNILYAPALLF. At 454 to 515 the chain is on the cytoplasmic side; that stretch reads LRNVCQMKPS…VLSDQEGYSE (62 aa). The interval 489 to 515 is disordered; it reads AAKEPHGSSSGNHSVHAVLSDQEGYSE.

The protein belongs to the major facilitator superfamily. Vesicular transporter family. Electric lobe.

The protein resides in the membrane. Involved in acetylcholine transport into synaptic vesicles. The polypeptide is Vesicular acetylcholine transporter (Tetronarce californica (Pacific electric ray)).